A 345-amino-acid chain; its full sequence is Tyrosine--tRNA ligase (345 aa).

An L-tyrosine-binding site is contributed by Y36. A 'HIGH' region motif is present at residues 41 to 49; the sequence is PTGEMHIGH. Positions 163, 167, 170, and 185 each coordinate L-tyrosine.

Belongs to the class-I aminoacyl-tRNA synthetase family. TyrS type 3 subfamily. Homodimer.

The protein localises to the cytoplasm. It carries out the reaction tRNA(Tyr) + L-tyrosine + ATP = L-tyrosyl-tRNA(Tyr) + AMP + diphosphate + H(+). In terms of biological role, catalyzes the attachment of tyrosine to tRNA(Tyr) in a two-step reaction: tyrosine is first activated by ATP to form Tyr-AMP and then transferred to the acceptor end of tRNA(Tyr). In Natronomonas pharaonis (strain ATCC 35678 / DSM 2160 / CIP 103997 / JCM 8858 / NBRC 14720 / NCIMB 2260 / Gabara) (Halobacterium pharaonis), this protein is Tyrosine--tRNA ligase.